The chain runs to 123 residues: CD59 glycoprotein (123 aa).

The first 25 residues, 1–25 (MGSKGGFILLWLLSILAVLCHLGHS), serve as a signal peptide directing secretion. The 78-residue stretch at 26–103 (LQCYNCINPA…LCNKSDATIS (78 aa)) folds into the UPAR/Ly6 domain. Cystine bridges form between Cys28–Cys51, Cys31–Cys38, Cys44–Cys65, Cys71–Cys89, and Cys90–Cys95. N-linked (GlcNAc...) asparagine glycosylation is present at Asn43. Residue Ser98 is the site of GPI-anchor amidated serine attachment. Residues 99–123 (DATISSGKTALLVILLLVATWHFCL) constitute a propeptide, removed in mature form.

As to quaternary structure, interacts with T-cell surface antigen CD2. N- and O-glycosylated. Expressed in all tissues tested (lung, testis liver, kidney, spleen, heart and skeletal muscle). Highest levels in lung and spleen, lowest levels in liver and skeletal muscle.

The protein localises to the cell membrane. The protein resides in the secreted. Its function is as follows. Potent inhibitor of the complement membrane attack complex (MAC) action, which protects self-cells from damage during complement activation. Acts by binding to the beta-haipins of C8 (C8A and C8B) components of the assembling MAC, forming an intermolecular beta-sheet that prevents incorporation of the multiple copies of C9 required for complete formation of the osmolytic pore. The sequence is that of CD59 glycoprotein from Sus scrofa (Pig).